The primary structure comprises 190 residues: MSTENSPTDYATLTQVLQQQGVALTAAEMHGLLSGLLCGGNRDDSWLTLVHDLTNEGMAFSQHLSQPLQVLYGQTRSALEGGEFAFQLLLPGEDDASVFARADALAGWVNHFLLGLGMMQTKLGQVKGDVGESIDDLRNIAQLGYDEDEDQETLAHSLEEVAEYVRMAAMLCHGEFSCSGGPASDTPRLH.

This sequence belongs to the UPF0149 family.

The polypeptide is UPF0149 protein NT01EI_3357 (Edwardsiella ictaluri (strain 93-146)).